The primary structure comprises 191 residues: Threonylcarbamoyl-AMP synthase (191 aa).

Residues 10–191 (VPKLTQCVRT…DLYTDAIIRA (182 aa)) form the YrdC-like domain.

This sequence belongs to the SUA5 family. TsaC subfamily.

It is found in the cytoplasm. The catalysed reaction is L-threonine + hydrogencarbonate + ATP = L-threonylcarbamoyladenylate + diphosphate + H2O. Functionally, required for the formation of a threonylcarbamoyl group on adenosine at position 37 (t(6)A37) in tRNAs that read codons beginning with adenine. Catalyzes the conversion of L-threonine, HCO(3)(-)/CO(2) and ATP to give threonylcarbamoyl-AMP (TC-AMP) as the acyladenylate intermediate, with the release of diphosphate. The protein is Threonylcarbamoyl-AMP synthase of Saccharophagus degradans (strain 2-40 / ATCC 43961 / DSM 17024).